The following is a 490-amino-acid chain: Bifunctional protein GlmU (490 aa).

The pyrophosphorylase stretch occupies residues 1–241; that stretch reads MSSPGDTAVL…SALVAGVNNR (241 aa). Residues 12-15, Lys26, Gln83, 88-89, 112-114, Gly151, Glu166, Asn181, and Asn239 each bind UDP-N-acetyl-alpha-D-glucosamine; these read LAAG, GT, and SGD. Residue Asp114 coordinates Mg(2+). Asn239 contacts Mg(2+). The interval 242–262 is linker; sequence VQLAQLGAELNRRIVAAHQLA. Residues 263–490 form an N-acetyltransferase region; it reads GVTVVDPATT…AGGRPAGEAE (228 aa). Arg344 and Lys362 together coordinate UDP-N-acetyl-alpha-D-glucosamine. Residue His374 is the Proton acceptor of the active site. Tyr377 and Asn388 together coordinate UDP-N-acetyl-alpha-D-glucosamine. Acetyl-CoA is bound by residues Ala391, 397 to 398, Ser416, and Ala434; that span reads NY. Positions 462 to 490 are disordered; the sequence is RRKRPGSAAARAAEAAEKAAGGRPAGEAE. A compositionally biased stretch (low complexity) spans 467 to 490; it reads GSAAARAAEAAEKAAGGRPAGEAE.

It in the N-terminal section; belongs to the N-acetylglucosamine-1-phosphate uridyltransferase family. In the C-terminal section; belongs to the transferase hexapeptide repeat family. As to quaternary structure, homotrimer. Mg(2+) is required as a cofactor.

Its subcellular location is the cytoplasm. The catalysed reaction is alpha-D-glucosamine 1-phosphate + acetyl-CoA = N-acetyl-alpha-D-glucosamine 1-phosphate + CoA + H(+). It carries out the reaction N-acetyl-alpha-D-glucosamine 1-phosphate + UTP + H(+) = UDP-N-acetyl-alpha-D-glucosamine + diphosphate. Its pathway is nucleotide-sugar biosynthesis; UDP-N-acetyl-alpha-D-glucosamine biosynthesis; N-acetyl-alpha-D-glucosamine 1-phosphate from alpha-D-glucosamine 6-phosphate (route II): step 2/2. It functions in the pathway nucleotide-sugar biosynthesis; UDP-N-acetyl-alpha-D-glucosamine biosynthesis; UDP-N-acetyl-alpha-D-glucosamine from N-acetyl-alpha-D-glucosamine 1-phosphate: step 1/1. It participates in bacterial outer membrane biogenesis; LPS lipid A biosynthesis. Catalyzes the last two sequential reactions in the de novo biosynthetic pathway for UDP-N-acetylglucosamine (UDP-GlcNAc). The C-terminal domain catalyzes the transfer of acetyl group from acetyl coenzyme A to glucosamine-1-phosphate (GlcN-1-P) to produce N-acetylglucosamine-1-phosphate (GlcNAc-1-P), which is converted into UDP-GlcNAc by the transfer of uridine 5-monophosphate (from uridine 5-triphosphate), a reaction catalyzed by the N-terminal domain. The chain is Bifunctional protein GlmU from Mycolicibacterium paratuberculosis (strain ATCC BAA-968 / K-10) (Mycobacterium paratuberculosis).